We begin with the raw amino-acid sequence, 420 residues long: 20-oxo-5-O-mycaminosyltylactone 23-monooxygenase (420 aa).

The interval 1 to 28 (MSSSGDARPSQKGILLPAARANDTDEAA) is disordered. Residues His-118, Arg-122, Arg-311, His-367, and Cys-369 each contribute to the heme site.

It belongs to the cytochrome P450 family.

The catalysed reaction is 20-oxo-5-O-beta-D-mycaminosyltylonolide + 2 reduced [2Fe-2S]-[ferredoxin] + O2 + 2 H(+) = 5-O-beta-D-mycaminosyltylonolide + 2 oxidized [2Fe-2S]-[ferredoxin] + H2O. Its pathway is antibiotic biosynthesis; tylosin biosynthesis. In terms of biological role, involved in the biosynthesis of the complex macrolide antibiotic tylosin. Catalyzes the hydroxylation of 20-oxo-5-O-beta-mycaminosyltylactone at the C-23 position to yield 5-O-beta-mycaminosyltylonolide. The protein is 20-oxo-5-O-mycaminosyltylactone 23-monooxygenase of Streptomyces fradiae (Streptomyces roseoflavus).